The following is a 490-amino-acid chain: Vacuolar amino acid transporter 7 (490 aa).

Over 1–6 (MEATSS) the chain is Cytoplasmic. Residues 7 to 27 (ALSSTANLVKTIVGAGTLAIP) traverse the membrane as a helical segment. Topologically, residues 28–34 (YSFKSDG) are vacuolar. Residues 35-55 (VLVGVILTLLAAVTSGLGLFV) form a helical membrane-spanning segment. Topologically, residues 56-84 (LSKCSKTLINPRNSSFFTLCMLTYPTLAP) are cytoplasmic. The helical transmembrane segment at 85–105 (IFDLAMIVQCFGVGLSYLVLI) threads the bilayer. The Vacuolar portion of the chain corresponds to 106-108 (GDL). A helical transmembrane segment spans residues 109–129 (FPGLFGGERNYWIIASAVIII). Over 130-143 (PLCLVKKLDQLKYS) the chain is Cytoplasmic. A helical membrane pass occupies residues 144 to 164 (SILGLFALAYISILVFSHFVF). At 165-190 (ELGKGELTNILRNDICWWKIHDFKGL) the chain is on the vacuolar side. A helical transmembrane segment spans residues 191–211 (LSTFSIIIFAFTGSMNLFPMI). The Cytoplasmic portion of the chain corresponds to 212-221 (NELKDNSMEN). Residues 222–242 (ITFVINNSISLSTALFLIVGL) traverse the membrane as a helical segment. Topologically, residues 243 to 264 (SGYLTFGNETLGNLMLNYDPNS) are vacuolar. Residues 265–285 (IWIVIGKFCLGSMLILSFPLL) form a helical membrane-spanning segment. The Cytoplasmic portion of the chain corresponds to 286–397 (FHPLRIAVNN…FVKSRFYWIT (112 aa)). Residues 355–374 (NGNFDNGSIESQENNNDERG) are disordered. A compositionally biased stretch (polar residues) spans 357-368 (NFDNGSIESQEN). Residues 398–418 (ALLLISMYTLALSVQSFALVL) traverse the membrane as a helical segment. Topologically, residues 419–428 (SFVGATGSTS) are vacuolar. A helical transmembrane segment spans residues 429–449 (ISFTLPGLLGYKLIGLDSLAI). The Cytoplasmic portion of the chain corresponds to 450-463 (GKMIPPKDRFYKRC). A helical transmembrane segment spans residues 464–484 (SLLLVFYGLSVMFLSLYVTVF). Residues 485–490 (NRSDEA) lie on the Vacuolar side of the membrane.

The protein belongs to the amino acid/polyamine transporter 2 family.

It localises to the vacuole membrane. Its function is as follows. Probable amino acid transporter of unknown specificity. This is Vacuolar amino acid transporter 7 (AVT7) from Saccharomyces cerevisiae (strain ATCC 204508 / S288c) (Baker's yeast).